Consider the following 1119-residue polypeptide: MSKAEREMYKKVRRIMVSDLKRDLIGPAHDESDVIYEAPSQAYITGILYPLESEVETEKSLEDVQFADVYDEPESGMEEDVEQQRNSELEQEAEEEKITPNKKFKHQNSLGIRCYVRETTDHIRASIAWGRYTSSKKFDSERKREVILWTRQIECFEEYISLSSFDQNIDIPITQEVSLVVSKKKLSGTDVFLVSVFLVNKRVDKNSNNAMFQCELTLTHEEGKGIFLCENEARKDKNDFSEFLYRNKPVFAKGFGCAVTWKAESSNYASELKSAFIPEHEVESMSTDLPYDENYGELPKGYFSIKQFAEADDQRETIDKLNNLANRYESWINKLPVDKVANKEATERVIKDCQATLTRIRRGIQLLANEENNKAFVAFKFMNTVMHTQDAMKRYSRNNKTTTLETEIRKENLEWRPFQLAFILLNLEGLVDLKSKDRKIVDLLWFPTGGGKTEAYLGICAFLLGYRRLFASTSSAYERDGGVTILLRYTLRLLTTQQRDRLMRMISACEYTRQKTNAFGQSEFSVGFWVGAQVTVNKLDDLTENEYYLDRDKVLKEYEKIEKQVIECPCCGTKGLEYKFLPSRDTKTKKTGIKIFCTNESCFFSKTHIPVYLVDEEIYRKLPTVVISTVDKFARLPWDEKTAALFGKVNRFCERCGYIAEGEKHEKSHRNPKASVHDVKPFYPPELIIQDELHLITGPLGTVYGGYETVIEELSTAHEGEDYLKPKYIAATATIKNAEVQVEKVFGRKLTQQFPPPGLKVEDSFFARERNLDEFPFRLYAGVCVSGHSMKTVLLRIYAVLLQTTEHLLEDEELSKYIDPYRTLVGYFNSIRELGGAVRLLEDDIKKRIQTLQKKYKYSKQRYISRKPELTSRVPSSRIPKVLEQLEKEIGNEELDVVLATNMISVGMDVDRLGLMVITGQPKQTSEYIQSSSRVGRSKPGLVITVYNPYRPRDMSHYQNFKGYHQRLYHFVEGTTATPYASRARDRFLHAIAVALLRLSYPELAKNLDAKNIKDMDLNYLKDVVKKRVSTVEYRNVSDTMEHLQHFLDEWISRAVSEDNLQYYFNPKTRSARIGNQSRLLARFSEEKKHGGKPTLDSMRQVEGTSSLYIYEGWNSSEE.

Residues 73–95 (PESGMEEDVEQQRNSELEQEAEE) form a disordered region. The Helicase C-terminal domain occupies 813 to 986 (ELSKYIDPYR…ATPYASRARD (174 aa)).

This sequence belongs to the helicase family.

The protein localises to the cytoplasm. Its function is as follows. Component of antiviral defense system DISARM (defense island system associated with restriction-modification), composed of DrmE, DrmA, DrmB, DrmC and DrmMII. DISARM is probably a multi-gene restriction module, this subunit is probably a helicase. Expression of DISARM in B.subtilis (strain BEST7003) confers resistance to phages Nf, phi29, phi105, phi3T, SPO1, SPR and SPP1. Protection is over 10(7)-fold against phi3T, 10(4)-10(5)-fold against Nf, phi29, phi105 and SPR, 100-fold against SPO1 and 10-fold against SPP1. DISARM does not interfere with phage adsorption, but instead interferes with (phi3T) DNA replication early in its cycle, preventing replication, circularization and lysogeny and probably causes phage DNA degradation (DNA is degraded in SPP1-infected cells). This chain is DISARM protein DrmA, found in Bacillus paralicheniformis (strain ATCC 9945a / NCIMB 11709 / CD-2).